The sequence spans 265 residues: 4-hydroxy-tetrahydrodipicolinate reductase (265 aa).

Residues 7–12 and aspartate 33 contribute to the NAD(+) site; that span reads GASGRM. Residue arginine 34 coordinates NADP(+). Residues 96-98 and 120-123 each bind NAD(+); these read GTT and AANM. Histidine 153 serves as the catalytic Proton donor/acceptor. Position 154 (histidine 154) interacts with (S)-2,3,4,5-tetrahydrodipicolinate. Catalysis depends on lysine 157, which acts as the Proton donor. 163 to 164 is a binding site for (S)-2,3,4,5-tetrahydrodipicolinate; it reads GT.

Belongs to the DapB family.

Its subcellular location is the cytoplasm. The enzyme catalyses (S)-2,3,4,5-tetrahydrodipicolinate + NAD(+) + H2O = (2S,4S)-4-hydroxy-2,3,4,5-tetrahydrodipicolinate + NADH + H(+). It carries out the reaction (S)-2,3,4,5-tetrahydrodipicolinate + NADP(+) + H2O = (2S,4S)-4-hydroxy-2,3,4,5-tetrahydrodipicolinate + NADPH + H(+). Its pathway is amino-acid biosynthesis; L-lysine biosynthesis via DAP pathway; (S)-tetrahydrodipicolinate from L-aspartate: step 4/4. In terms of biological role, catalyzes the conversion of 4-hydroxy-tetrahydrodipicolinate (HTPA) to tetrahydrodipicolinate. The polypeptide is 4-hydroxy-tetrahydrodipicolinate reductase (Burkholderia orbicola (strain MC0-3)).